The primary structure comprises 440 residues: Dihydrolipoyllysine-residue acetyltransferase component of pyruvate dehydrogenase complex (440 aa).

A Lipoyl-binding domain is found at 2–78; the sequence is SIEVKMPALS…AVGQVIAVMA (77 aa). The residue at position 43 (Lys-43) is an N6-lipoyllysine. The disordered stretch occupies residues 91–113; that stretch reads ASSQISEPSEKADVAQKETADSE. Residues 98–110 show a composition bias toward basic and acidic residues; it reads PSEKADVAQKETA. The Peripheral subunit-binding (PSBD) domain occupies 149–186; that stretch reads KASPLAKRLAKKNHVDLKQVNGSGPHGRIIKADIEAFI. Over residues 192 to 202 the composition is skewed to polar residues; the sequence is ASSNPSVSTPE. Residues 192–214 are disordered; it reads ASSNPSVSTPEASGKITHDTPHN. The active site involves His-412.

It belongs to the 2-oxoacid dehydrogenase family. As to quaternary structure, forms a 24-polypeptide structural core with octahedral symmetry. It depends on (R)-lipoate as a cofactor.

It carries out the reaction N(6)-[(R)-dihydrolipoyl]-L-lysyl-[protein] + acetyl-CoA = N(6)-[(R)-S(8)-acetyldihydrolipoyl]-L-lysyl-[protein] + CoA. In terms of biological role, the pyruvate dehydrogenase complex catalyzes the overall conversion of pyruvate to acetyl-CoA and CO(2). It contains multiple copies of three enzymatic components: pyruvate dehydrogenase (E1), dihydrolipoamide acetyltransferase (E2) and lipoamide dehydrogenase (E3). This chain is Dihydrolipoyllysine-residue acetyltransferase component of pyruvate dehydrogenase complex (pdhC), found in Zymomonas mobilis subsp. mobilis (strain ATCC 31821 / ZM4 / CP4).